Here is a 270-residue protein sequence, read N- to C-terminus: S-adenosylmethionine decarboxylase proenzyme (270 aa).

Residue S120 is the Schiff-base intermediate with substrate; via pyruvic acid of the active site. Position 120 is a pyruvic acid (Ser); by autocatalysis (S120). Catalysis depends on H125, which acts as the Proton acceptor; for processing activity. Residue C148 is the Proton donor; for catalytic activity of the active site.

Belongs to the prokaryotic AdoMetDC family. Type 2 subfamily. As to quaternary structure, heterooctamer of four alpha and four beta chains arranged as a tetramer of alpha/beta heterodimers. It depends on pyruvate as a cofactor. Post-translationally, is synthesized initially as an inactive proenzyme. Formation of the active enzyme involves a self-maturation process in which the active site pyruvoyl group is generated from an internal serine residue via an autocatalytic post-translational modification. Two non-identical subunits are generated from the proenzyme in this reaction, and the pyruvate is formed at the N-terminus of the alpha chain, which is derived from the carboxyl end of the proenzyme. The post-translation cleavage follows an unusual pathway, termed non-hydrolytic serinolysis, in which the side chain hydroxyl group of the serine supplies its oxygen atom to form the C-terminus of the beta chain, while the remainder of the serine residue undergoes an oxidative deamination to produce ammonia and the pyruvoyl group blocking the N-terminus of the alpha chain.

The enzyme catalyses S-adenosyl-L-methionine + H(+) = S-adenosyl 3-(methylsulfanyl)propylamine + CO2. The protein operates within amine and polyamine biosynthesis; S-adenosylmethioninamine biosynthesis; S-adenosylmethioninamine from S-adenosyl-L-methionine: step 1/1. Catalyzes the decarboxylation of S-adenosylmethionine to S-adenosylmethioninamine (dcAdoMet), the propylamine donor required for the synthesis of the polyamines spermine and spermidine from the diamine putrescine. In Alkaliphilus oremlandii (strain OhILAs) (Clostridium oremlandii (strain OhILAs)), this protein is S-adenosylmethionine decarboxylase proenzyme.